The sequence spans 840 residues: Exocyst complex component 7 (840 aa).

The tract at residues 1-112 is disordered; it reads MSAPPRLSAR…ATSTTSPFSY (112 aa). Residues 19–31 show a composition bias toward polar residues; the sequence is SNAPSPTSPTGLK. 2 stretches are compositionally biased toward low complexity: residues 50–73 and 83–111; these read KSSV…TLPK and QQQQ…SPFS. Residues 193–227 adopt a coiled-coil conformation; that stretch reads KNNATSELTEQDDQLENDKRDLQFIKEQLEKNNSM. A disordered region spans residues 601–638; it reads QDNNNSNSNSNAPSSTSSNSKSSSSSSSSSSSNSASST. A compositionally biased stretch (low complexity) spans 603-637; the sequence is NNNSNSNSNAPSSTSSNSKSSSSSSSSSSSNSASS.

Belongs to the EXO70 family. As to quaternary structure, the exocyst complex is composed of sec3/exoc1, sec5/exoc2, sec6/exoc3, sec8/exoc4, sec10/exoc5, sec15/exoc6, exo70/exoc7 and exo84/exoc8.

The protein localises to the cytoplasm. It localises to the cytosol. It is found in the cell membrane. Its subcellular location is the midbody. The protein resides in the midbody ring. In terms of biological role, component of the exocyst complex involved in the docking of exocytic vesicles with fusion sites on the plasma membrane. This is Exocyst complex component 7 (exoc7) from Dictyostelium discoideum (Social amoeba).